The sequence spans 340 residues: Large ribosomal subunit protein uL29m (340 aa).

Positions 1–10 (MIRSLHTSAV) are enriched in polar residues. The interval 1–22 (MIRSLHTSAVRQGRKKWPKPLP) is disordered.

It belongs to the universal ribosomal protein uL29 family. As to quaternary structure, component of the mitochondrial large ribosomal subunit. Mature mitochondrial ribosomes consist of a small (37S) and a large (54S) subunit. The 37S subunit contains at least 33 different proteins and 1 molecule of RNA (15S). The 54S subunit contains at least 45 different proteins and 1 molecule of RNA (21S).

The protein localises to the mitochondrion. The protein is Large ribosomal subunit protein uL29m (MRPL4) of Yarrowia lipolytica (strain CLIB 122 / E 150) (Yeast).